The sequence spans 352 residues: 7,8-didemethyl-8-hydroxy-5-deazariboflavin synthase (352 aa).

Residues isoleucine 35 to asparagine 275 form the Radical SAM core domain. [4Fe-4S] cluster-binding residues include cysteine 49, cysteine 53, and cysteine 56.

Belongs to the radical SAM superfamily. CofG family. In terms of assembly, consists of two subunits, CofG and CofH. The cofactor is [4Fe-4S] cluster.

The catalysed reaction is 5-amino-5-(4-hydroxybenzyl)-6-(D-ribitylimino)-5,6-dihydrouracil + S-adenosyl-L-methionine = 7,8-didemethyl-8-hydroxy-5-deazariboflavin + 5'-deoxyadenosine + L-methionine + NH4(+) + H(+). It participates in cofactor biosynthesis; coenzyme F0 biosynthesis. Catalyzes the radical-mediated synthesis of 7,8-didemethyl-8-hydroxy-5-deazariboflavin from 5-amino-5-(4-hydroxybenzyl)-6-(D-ribitylimino)-5,6-dihydrouracil. This is 7,8-didemethyl-8-hydroxy-5-deazariboflavin synthase from Methanococcus maripaludis (strain C6 / ATCC BAA-1332).